The chain runs to 207 residues: Guanylate kinase (207 aa).

The Guanylate kinase-like domain occupies 3–181 (GQLFVICGPS…AVEMVVSIVR (179 aa)). 10 to 17 (GPSGAGKT) serves as a coordination point for ATP.

Belongs to the guanylate kinase family.

It localises to the cytoplasm. It catalyses the reaction GMP + ATP = GDP + ADP. Its function is as follows. Essential for recycling GMP and indirectly, cGMP. The protein is Guanylate kinase (gmk) of Thermotoga maritima (strain ATCC 43589 / DSM 3109 / JCM 10099 / NBRC 100826 / MSB8).